Reading from the N-terminus, the 813-residue chain is MGSNLPAQPNLRLTTDGLYKRDVFRFPDPFAVATVGGEQTHTTSVIKKTLNPYWNEMFDLRVNEDSILAIQIFDQKKFKKKDQGFLGVINVRIGDVIDLQMGGDEMLTRDLKKSNDNLVVHGKLIINLSTNLSTPNTNQANGLHRSHVQSSTSSGLVPQVAPSSSHPAASGTAPVDPSASNPSLNPQRVPSTTRPSSTAAPASAAGAAVSNSHGSRTNLSSFEDSQGRLPAGWERREDNLGRTYYVDHNTRTTTWTRPSSNYNEHAQRSQREANMQLERRAHQSRMLPEDRTGANSPNLPESSQQAHTPPAGGSANAVSMMATGATTAGTGELPPGWEQRTTPEGRPYFVDHNTRTTTWVDPRRQQYIRMYGQNANGTNTTIQQQPVSQLGPLPSGWEMRLTNTARVYFVDHNTKTTTWDDPRLPSSLDQGVPQYKRDFRRKLIYFRSQPALRIMSGQCHVKVRRNNIFEDSYAEIMRQSASDLKKRLMIKFDGEDGLDYGGLSREFFFLLSHEMFNPFYCLFEYSAHDNYTLQINPHSGVNPEHLNYFKFIGRVVGLAIFHRRFLDSFFIGAFYKMMLRKKVSLQDMEGVDEDLHRNLTWTLDNDIEGVLELTFSVDDEKFGERRTIDLKPGGRDIPVTNENKAEYVELVTEWKIVKRVEEQFNAFMSGFNELIPADLVNVFDERELELLIGGIADIDVDDWKKHTDYRGYQESDEVIQNFWKIVRSWDAEQKSRLLQFTTGTSRIPVNGFKDLQGSDGPRRFTIEKSGDPAALPKSHTCFNRLDLPPYKSYETLEHKMSIAVEETLGFGQE.

The region spanning 1–109 (MGSNLPAQPN…QMGGDEMLTR (109 aa)) is the C2 domain. 2 disordered regions span residues 131–235 (NLST…GWER) and 251–351 (RTTT…YFVD). Residues 148–167 (VQSSTSSGLVPQVAPSSSHP) show a composition bias toward polar residues. Over residues 188–215 (RVPSTTRPSSTAAPASAAGAAVSNSHGS) the composition is skewed to low complexity. In terms of domain architecture, WW 1 spans 227–260 (GRLPAGWERREDNLGRTYYVDHNTRTTTWTRPSS). Positions 251-264 (RTTTWTRPSSNYNE) are enriched in polar residues. Residues 265 to 292 (HAQRSQREANMQLERRAHQSRMLPEDRT) are compositionally biased toward basic and acidic residues. Residues 293 to 307 (GANSPNLPESSQQAH) show a composition bias toward polar residues. Positions 322–331 (ATGATTAGTG) are enriched in low complexity. 2 consecutive WW domains span residues 331–364 (GELP…DPRR) and 391–424 (GPLP…DPRL). The HECT domain occupies 480-813 (SASDLKKRLM…VEETLGFGQE (334 aa)). The Glycyl thioester intermediate role is filled by C781.

This sequence belongs to the RSP5/NEDD4 family. In terms of assembly, interacts with creD.

The protein localises to the cytoplasm. It carries out the reaction S-ubiquitinyl-[E2 ubiquitin-conjugating enzyme]-L-cysteine + [acceptor protein]-L-lysine = [E2 ubiquitin-conjugating enzyme]-L-cysteine + N(6)-ubiquitinyl-[acceptor protein]-L-lysine.. The protein operates within protein modification; protein ubiquitination. In terms of biological role, E3 ubiquitin-protein ligase which accepts ubiquitin from an E2 ubiquitin-conjugating enzyme in the form of a thioester and then directly transfers the ubiquitin to targeted substrates. Probably involved in the regulatory network controlling carbon source utilization. The protein is Probable E3 ubiquitin-protein ligase hulA (hulA) of Aspergillus fumigatus (strain CBS 144.89 / FGSC A1163 / CEA10) (Neosartorya fumigata).